Consider the following 138-residue polypeptide: Dual specificity phosphatase ibp1 (138 aa).

The region spanning serine 19–glycine 133 is the Rhodanese domain. The active-site Phosphocysteine intermediate is the cysteine 70.

The protein belongs to the MPI phosphatase family.

The protein localises to the cytoplasm. Its subcellular location is the nucleus. It catalyses the reaction O-phospho-L-tyrosyl-[protein] + H2O = L-tyrosyl-[protein] + phosphate. May play a role in DNA replication checkpoint via regulation of hsk1 or may act downstream of hsk1 in an S phase regulatory pathway. The protein is Dual specificity phosphatase ibp1 (ibp1) of Schizosaccharomyces pombe (strain 972 / ATCC 24843) (Fission yeast).